The following is a 310-amino-acid chain: Olfactory receptor 2A4 (310 aa).

The Extracellular segment spans residues 1–24; it reads MGDNITSIREFLLLGFPVGPRIQM. Asn-4 carries N-linked (GlcNAc...) asparagine glycosylation. The helical transmembrane segment at 25–48 threads the bilayer; that stretch reads LLFGLFSLFYVFTLLGNGTILGLI. Residues 49–56 are Cytoplasmic-facing; the sequence is SLDSRLHA. The chain crosses the membrane as a helical span at residues 57-78; the sequence is PMYFFLSHLAVVDIAYACNTVP. At 79 to 99 the chain is on the extracellular side; it reads RMLVNLLHPAKPISFAGRMMQ. The chain crosses the membrane as a helical span at residues 100–119; sequence TFLFSTFAVTECLLLVVMSY. The Cytoplasmic segment spans residues 120–138; that stretch reads DLYVAICHPLRYLAIMTWR. The helical transmembrane segment at 139 to 157 threads the bilayer; it reads VCITLAVTSWTTGVLLSLI. The Extracellular segment spans residues 158 to 194; the sequence is HLVLLLPLPFCRPQKIYHFFCEILAVLKLACADTHIN. Residues 195-218 traverse the membrane as a helical segment; that stretch reads ENMVLAGAISGLVGPLSTIVVSYM. The Cytoplasmic segment spans residues 219 to 235; sequence CILCAILQIQSREVQRK. A helical membrane pass occupies residues 236–258; it reads AFRTCFSHLCVIGLVYGTAIIMY. At 259–271 the chain is on the extracellular side; that stretch reads VGPRYGNPKEQKK. Residues 272–291 form a helical membrane-spanning segment; sequence YLLLFHSLFNPMLNPLICSL. Over 292–310 the chain is Cytoplasmic; it reads RNSEVKNTLKRVLGVERAL.

This sequence belongs to the G-protein coupled receptor 1 family.

Its subcellular location is the cell membrane. Its function is as follows. Odorant receptor. This Homo sapiens (Human) protein is Olfactory receptor 2A4 (OR2A4).